A 253-amino-acid chain; its full sequence is MMLLQLSNVSVDTRLAPFSTQVAAGLQTHLIGPNGAGKSTLLASLAGLLPSGGDISLAGKALSLYSGPDLARLRAYLCQQQSALTMMPVFQYLSLYQPAGASLDAIATTIGYLCERLRLTDKLPRMLSQLSGGEWQRVRLAAVFLQVWPDINPDSKLLLLDEPYTGLDVAQKVALDSLLREFCSAGRSAIISAHDLNHTLQQADQVWLMSGGNVLAQGSTDKVMRANILSEVFEVDFQIHNFNRQNWIITKDF.

Positions 4-236 (LQLSNVSVDT…NILSEVFEVD (233 aa)) constitute an ABC transporter domain. 32 to 39 (GPNGAGKS) lines the ATP pocket.

It belongs to the ABC transporter superfamily. Vitamin B12 importer (TC 3.A.1.13.1) family. As to quaternary structure, the complex is composed of two ATP-binding proteins (BtuD), two transmembrane proteins (BtuC) and a solute-binding protein (BtuF).

The protein localises to the cell inner membrane. It catalyses the reaction an R-cob(III)alamin(out) + ATP + H2O = an R-cob(III)alamin(in) + ADP + phosphate + H(+). Its function is as follows. Part of the ABC transporter complex BtuCDF involved in vitamin B12 import. Responsible for energy coupling to the transport system. This chain is Vitamin B12 import ATP-binding protein BtuD, found in Yersinia enterocolitica serotype O:8 / biotype 1B (strain NCTC 13174 / 8081).